Here is a 333-residue protein sequence, read N- to C-terminus: Catabolite control protein A (333 aa).

The region spanning 7–61 (ITIYDVAREAGVSMATVSRVVNGNKNVKENTRKKVLEVIDRLDYRPNAVARGLAS) is the HTH lacI-type domain. The H-T-H motif DNA-binding region spans 9–28 (IYDVAREAGVSMATVSRVVN).

Functionally, global transcriptional regulator of carbon catabolite repression (CCR) and carbon catabolite activation (CCA), which ensures optimal energy usage under diverse conditions. This Streptococcus mutans serotype c (strain ATCC 700610 / UA159) protein is Catabolite control protein A (ccpA).